The chain runs to 455 residues: Bifunctional protein GlmU (455 aa).

The interval 1 to 226 is pyrophosphorylase; sequence MSLDIVILAA…AMEVQGANDR (226 aa). UDP-N-acetyl-alpha-D-glucosamine-binding positions include 8–11, Lys-22, Gln-73, 78–79, 99–101, Gly-136, Glu-151, Asn-166, and Asn-224; these read LAAG, GT, and YGD. Asp-101 lines the Mg(2+) pocket. Mg(2+) is bound at residue Asn-224. Residues 227–247 form a linker region; that stretch reads RQLSELERHYQLREGRRLMAQ. The N-acetyltransferase stretch occupies residues 248 to 455; it reads GVTLRDPARF…WKRPEKIKKS (208 aa). Residues Arg-330 and Lys-348 each coordinate UDP-N-acetyl-alpha-D-glucosamine. His-360 acts as the Proton acceptor in catalysis. Residues Tyr-363 and Asn-374 each contribute to the UDP-N-acetyl-alpha-D-glucosamine site. Acetyl-CoA contacts are provided by residues Ala-377, 383–384, Ser-402, Ala-420, and Arg-437; that span reads NY.

It in the N-terminal section; belongs to the N-acetylglucosamine-1-phosphate uridyltransferase family. This sequence in the C-terminal section; belongs to the transferase hexapeptide repeat family. In terms of assembly, homotrimer. Mg(2+) is required as a cofactor.

It localises to the cytoplasm. The catalysed reaction is alpha-D-glucosamine 1-phosphate + acetyl-CoA = N-acetyl-alpha-D-glucosamine 1-phosphate + CoA + H(+). The enzyme catalyses N-acetyl-alpha-D-glucosamine 1-phosphate + UTP + H(+) = UDP-N-acetyl-alpha-D-glucosamine + diphosphate. The protein operates within nucleotide-sugar biosynthesis; UDP-N-acetyl-alpha-D-glucosamine biosynthesis; N-acetyl-alpha-D-glucosamine 1-phosphate from alpha-D-glucosamine 6-phosphate (route II): step 2/2. Its pathway is nucleotide-sugar biosynthesis; UDP-N-acetyl-alpha-D-glucosamine biosynthesis; UDP-N-acetyl-alpha-D-glucosamine from N-acetyl-alpha-D-glucosamine 1-phosphate: step 1/1. It functions in the pathway bacterial outer membrane biogenesis; LPS lipid A biosynthesis. In terms of biological role, catalyzes the last two sequential reactions in the de novo biosynthetic pathway for UDP-N-acetylglucosamine (UDP-GlcNAc). The C-terminal domain catalyzes the transfer of acetyl group from acetyl coenzyme A to glucosamine-1-phosphate (GlcN-1-P) to produce N-acetylglucosamine-1-phosphate (GlcNAc-1-P), which is converted into UDP-GlcNAc by the transfer of uridine 5-monophosphate (from uridine 5-triphosphate), a reaction catalyzed by the N-terminal domain. This chain is Bifunctional protein GlmU, found in Pseudomonas putida (strain ATCC 47054 / DSM 6125 / CFBP 8728 / NCIMB 11950 / KT2440).